Reading from the N-terminus, the 179-residue chain is UPF0227 protein Sbal195_2522 (179 aa).

The protein belongs to the UPF0227 family.

The chain is UPF0227 protein Sbal195_2522 from Shewanella baltica (strain OS195).